Consider the following 120-residue polypeptide: Ribonuclease P protein component 2 (120 aa).

This sequence belongs to the eukaryotic/archaeal RNase P protein component 2 family. As to quaternary structure, consists of a catalytic RNA component and at least 4-5 protein subunits.

Its subcellular location is the cytoplasm. The catalysed reaction is Endonucleolytic cleavage of RNA, removing 5'-extranucleotides from tRNA precursor.. In terms of biological role, part of ribonuclease P, a protein complex that generates mature tRNA molecules by cleaving their 5'-ends. This chain is Ribonuclease P protein component 2, found in Thermococcus gammatolerans (strain DSM 15229 / JCM 11827 / EJ3).